The chain runs to 105 residues: Small ribosomal subunit protein bS20 (105 aa).

This sequence belongs to the bacterial ribosomal protein bS20 family.

In terms of biological role, binds directly to 16S ribosomal RNA. The protein is Small ribosomal subunit protein bS20 of Caldanaerobacter subterraneus subsp. tengcongensis (strain DSM 15242 / JCM 11007 / NBRC 100824 / MB4) (Thermoanaerobacter tengcongensis).